The following is a 136-amino-acid chain: Large ribosomal subunit protein uL16 (136 aa).

It belongs to the universal ribosomal protein uL16 family. As to quaternary structure, part of the 50S ribosomal subunit.

In terms of biological role, binds 23S rRNA and is also seen to make contacts with the A and possibly P site tRNAs. In Rickettsia massiliae (strain Mtu5), this protein is Large ribosomal subunit protein uL16.